A 130-amino-acid chain; its full sequence is Histone H2A.1 (130 aa).

Residues 1-22 (MSGGKGKAGSSEKASTSRSAKA) form a disordered region. At serine 2 the chain carries N-acetylserine. Lysine 5 and lysine 7 each carry N6-acetyllysine. Glutamine 105 bears the N5-methylglutamine mark. Position 127 is a phosphoserine (serine 127). A [ST]-Q motif motif is present at residues 127–128 (SQ).

The protein belongs to the histone H2A family. In terms of assembly, the nucleosome is a histone octamer containing two molecules each of H2A, H2B, H3 and H4 assembled in one H3-H4 heterotetramer and two H2A-H2B heterodimers. The octamer wraps approximately 147 bp of DNA. In terms of processing, phosphorylated to form H2AS128ph (gamma-H2A) in response to DNA double-strand breaks (DSBs) generated by exogenous genotoxic agents and by stalled replication forks. Phosphorylation is dependent on the DNA damage checkpoint kinases MEC1/ATR and TEL1/ATM, spreads on either side of a detected DSB site and may mark the surrounding chromatin for recruitment of proteins required for DNA damage signaling and repair. Gamma-H2A is removed from the DNA prior to the strand invasion-primer extension step of the repair process and subsequently dephosphorylated. Dephosphorylation is necessary for efficient recovery from the DNA damage checkpoint. Acetylated by ESA1 to form H2AK4ac and H2AK7ac.

The protein resides in the nucleus. The protein localises to the chromosome. In terms of biological role, core component of nucleosome which plays a central role in DNA double strand break (DSB) repair. Nucleosomes wrap and compact DNA into chromatin, limiting DNA accessibility to the cellular machineries which require DNA as a template. Histones thereby play a central role in transcription regulation, DNA repair, DNA replication and chromosomal stability. DNA accessibility is regulated via a complex set of post-translational modifications of histones, also called histone code, and nucleosome remodeling. This chain is Histone H2A.1 (HTA1), found in Lodderomyces elongisporus (strain ATCC 11503 / CBS 2605 / JCM 1781 / NBRC 1676 / NRRL YB-4239) (Yeast).